The chain runs to 63 residues: MNFYKIFVFIALILALSVSQSEAGWLKKIGKKIERVGQNTRDATVKGLEVAQQAANVAATVRG.

Positions methionine 1 to alanine 23 are cleaved as a signal peptide. Position 62 is an arginine amide (arginine 62).

Monomer. Hemolymph.

It is found in the secreted. Functionally, cecropins have lytic and antibacterial activity against several Gram-negative bacteria. In Glossina morsitans morsitans (Savannah tsetse fly), this protein is Cecropin.